A 141-amino-acid polypeptide reads, in one-letter code: ATP synthase epsilon chain (141 aa).

Belongs to the ATPase epsilon chain family. As to quaternary structure, F-type ATPases have 2 components, CF(1) - the catalytic core - and CF(0) - the membrane proton channel. CF(1) has five subunits: alpha(3), beta(3), gamma(1), delta(1), epsilon(1). CF(0) has three main subunits: a, b and c.

It localises to the cell inner membrane. Its function is as follows. Produces ATP from ADP in the presence of a proton gradient across the membrane. The protein is ATP synthase epsilon chain of Hahella chejuensis (strain KCTC 2396).